A 354-amino-acid polypeptide reads, in one-letter code: Arginase-2, mitochondrial (354 aa).

The N-terminal 22 residues, 1-22 (MFLRSSVSRLLHGQIPCALTRS), are a transit peptide targeting the mitochondrion. Positions 120, 143, 145, and 147 each coordinate Mn(2+). Residues 145-149 (HADIN), 156-158 (SGN), and E202 each bind substrate. Mn(2+) is bound by residues D251 and D253. The substrate site is built by T265 and E296.

It belongs to the arginase family. As to quaternary structure, homotrimer. It depends on Mn(2+) as a cofactor.

Its subcellular location is the mitochondrion. It carries out the reaction L-arginine + H2O = urea + L-ornithine. It participates in nitrogen metabolism; urea cycle; L-ornithine and urea from L-arginine: step 1/1. In terms of biological role, may play a role in the regulation of extra-urea cycle arginine metabolism and also in down-regulation of nitric oxide synthesis. Extrahepatic arginase functions to regulate L-arginine bioavailability to nitric oxid synthase (NOS). Arginine metabolism is a critical regulator of innate and adaptive immune responses. Seems to be involved in negative regulation of the survival capacity of activated T cells. May suppress inflammation-related signaling in asthmatic airway epithelium. May play a role in promoting prenatal immune suppression. Regulates RPS6KB1 signaling, which promotes endothelial cell senescence and inflammation and implicates NOS3/eNOS dysfunction. Can inhibit endothelial autophagy independently of its enzymatic activity implicating mTORC2 signaling. Involved in vascular smooth muscle cell senescence and apoptosis independently of its enzymatic activity. The polypeptide is Arginase-2, mitochondrial (Arg2) (Rattus norvegicus (Rat)).